Consider the following 290-residue polypeptide: 4-diphosphocytidyl-2-C-methyl-D-erythritol kinase (290 aa).

K13 is a catalytic residue. 96–106 (PMGGGIGGGSS) contributes to the ATP binding site. D138 is a catalytic residue.

The protein belongs to the GHMP kinase family. IspE subfamily.

The enzyme catalyses 4-CDP-2-C-methyl-D-erythritol + ATP = 4-CDP-2-C-methyl-D-erythritol 2-phosphate + ADP + H(+). It functions in the pathway isoprenoid biosynthesis; isopentenyl diphosphate biosynthesis via DXP pathway; isopentenyl diphosphate from 1-deoxy-D-xylulose 5-phosphate: step 3/6. Catalyzes the phosphorylation of the position 2 hydroxy group of 4-diphosphocytidyl-2C-methyl-D-erythritol. The sequence is that of 4-diphosphocytidyl-2-C-methyl-D-erythritol kinase from Vibrio vulnificus (strain CMCP6).